We begin with the raw amino-acid sequence, 240 residues long: Oxygen-insensitive NADPH nitroreductase (240 aa).

Residues 11–15, serine 39, glutamine 67, 128–131, and 167–169 each bind FMN; these read HRSIR, YIGG, and KPR.

The protein belongs to the flavin oxidoreductase frp family. Homodimer. It depends on FMN as a cofactor.

Functionally, catalyzes the reduction of nitroaromatic compounds using NADPH. Has a broad electron acceptor specificity. Reduces nitrofurazone by a ping-pong bi-bi mechanism possibly to generate a two-electron transfer product. Major oxygen-insensitive nitroreductase in E.coli. This is Oxygen-insensitive NADPH nitroreductase (nfsA) from Escherichia coli (strain K12).